A 144-amino-acid chain; its full sequence is Large ribosomal subunit protein uL15 (144 aa).

The interval 1–54 (MRLNTLSPAAGAKHAPKRVGRGMGSGLGKTAGRGHKGQKSRSGGGVRPGFEGGQ) is disordered. Composition is skewed to gly residues over residues 21–31 (RGMGSGLGKTA) and 42–52 (SGGGVRPGFEG).

Belongs to the universal ribosomal protein uL15 family. As to quaternary structure, part of the 50S ribosomal subunit.

Binds to the 23S rRNA. This is Large ribosomal subunit protein uL15 from Shewanella oneidensis (strain ATCC 700550 / JCM 31522 / CIP 106686 / LMG 19005 / NCIMB 14063 / MR-1).